The chain runs to 245 residues: Myelin protein P0 (245 aa).

Positions 1 to 28 (MEPSGLRTPCSLLALVLLSALVLTPTLA) are cleaved as a signal peptide. The Ig-like V-type domain occupies 29 to 143 (IEVYTDREVY…VGKSSYVHLQ (115 aa)). The Extracellular portion of the chain corresponds to 29–153 (IEVYTDREVY…VQEKGPARAG (125 aa)). Cys-49 and Cys-125 are joined by a disulfide. N-linked (GlcNAc...) asparagine glycosylation is present at Asn-120. The chain crosses the membrane as a helical span at residues 154–174 (LILGIIIAVALALVIVVTILI). Residues 175 to 245 (LLIRYCWLRR…GIGDSRKDRK (71 aa)) are Cytoplasmic-facing. 2 stretches are compositionally biased toward basic and acidic residues: residues 199 to 208 (KLHKAKDSSK) and 224 to 245 (TRGK…KDRK). Residues 199–245 (KLHKAKDSSKRSSRQTPILYAMLDQTRGKSSEKKAKGGIGDSRKDRK) form a disordered region.

Belongs to the myelin P0 protein family.

The protein localises to the cell membrane. Its function is as follows. Creation of an extracellular membrane face which guides the wrapping process and ultimately compacts adjacent lamellae. The protein is Myelin protein P0 (mpz) of Xenopus laevis (African clawed frog).